The following is a 296-amino-acid chain: UDP-N-acetylenolpyruvoylglucosamine reductase (296 aa).

Residues 18–189 (LGGRALAEVR…TGADIVLRRG (172 aa)) enclose the FAD-binding PCMH-type domain. Arg166 is a catalytic residue. Catalysis depends on Cys218, which acts as the Proton donor. Glu289 is an active-site residue.

This sequence belongs to the MurB family. Requires FAD as cofactor.

It is found in the cytoplasm. The catalysed reaction is UDP-N-acetyl-alpha-D-muramate + NADP(+) = UDP-N-acetyl-3-O-(1-carboxyvinyl)-alpha-D-glucosamine + NADPH + H(+). It participates in cell wall biogenesis; peptidoglycan biosynthesis. Functionally, cell wall formation. In Nitratidesulfovibrio vulgaris (strain ATCC 29579 / DSM 644 / CCUG 34227 / NCIMB 8303 / VKM B-1760 / Hildenborough) (Desulfovibrio vulgaris), this protein is UDP-N-acetylenolpyruvoylglucosamine reductase.